The chain runs to 388 residues: Succinate--CoA ligase [ADP-forming] subunit beta (388 aa).

Residues lysine 9–histidine 244 enclose the ATP-grasp domain. Residues lysine 46, glycine 53–glycine 55, glutamate 99, threonine 102, and glutamate 107 contribute to the ATP site. Mg(2+) contacts are provided by asparagine 199 and aspartate 213. Residues asparagine 264 and glycine 321–valine 323 contribute to the substrate site.

It belongs to the succinate/malate CoA ligase beta subunit family. Heterotetramer of two alpha and two beta subunits. It depends on Mg(2+) as a cofactor.

The enzyme catalyses succinate + ATP + CoA = succinyl-CoA + ADP + phosphate. It catalyses the reaction GTP + succinate + CoA = succinyl-CoA + GDP + phosphate. Its pathway is carbohydrate metabolism; tricarboxylic acid cycle; succinate from succinyl-CoA (ligase route): step 1/1. Succinyl-CoA synthetase functions in the citric acid cycle (TCA), coupling the hydrolysis of succinyl-CoA to the synthesis of either ATP or GTP and thus represents the only step of substrate-level phosphorylation in the TCA. The beta subunit provides nucleotide specificity of the enzyme and binds the substrate succinate, while the binding sites for coenzyme A and phosphate are found in the alpha subunit. The polypeptide is Succinate--CoA ligase [ADP-forming] subunit beta (Shewanella amazonensis (strain ATCC BAA-1098 / SB2B)).